Here is a 558-residue protein sequence, read N- to C-terminus: Oxygen-dependent choline dehydrogenase (558 aa).

Residue 4 to 33 (DYIIIGAGSAGNVLATRLTEDSDTTVLLLE) coordinates FAD. Residue His473 is the Proton acceptor of the active site.

Belongs to the GMC oxidoreductase family. The cofactor is FAD.

The enzyme catalyses choline + A = betaine aldehyde + AH2. It carries out the reaction betaine aldehyde + NAD(+) + H2O = glycine betaine + NADH + 2 H(+). It participates in amine and polyamine biosynthesis; betaine biosynthesis via choline pathway; betaine aldehyde from choline (cytochrome c reductase route): step 1/1. Functionally, involved in the biosynthesis of the osmoprotectant glycine betaine. Catalyzes the oxidation of choline to betaine aldehyde and betaine aldehyde to glycine betaine at the same rate. The chain is Oxygen-dependent choline dehydrogenase from Citrobacter koseri (strain ATCC BAA-895 / CDC 4225-83 / SGSC4696).